The sequence spans 502 residues: Protein DETOXIFICATION 49 (502 aa).

12 helical membrane passes run 41-61 (LPLI…MLFL), 75-95 (LALG…SIGM), 123-143 (LLCS…LLFF), 153-173 (AEIF…LHPI), 190-210 (AFFA…SLGL), 216-236 (ALGA…YIVF), 267-287 (VSVC…GLLL), 293-313 (VASM…PSSL), 338-358 (RTGL…ALMV), 372-392 (IVKL…GNCP), 414-434 (LCCF…FSGF), and 439-459 (LWLG…VVLA).

The protein belongs to the multi antimicrobial extrusion (MATE) (TC 2.A.66.1) family.

It is found in the membrane. This is Protein DETOXIFICATION 49 from Arabidopsis thaliana (Mouse-ear cress).